Consider the following 88-residue polypeptide: Homeobox protein knotted-1-like 3 (88 aa).

In terms of domain architecture, ELK spans 4-24; it reads ELKKQLLRKYSGCLGNLRKEL. Residues 25–88 constitute a DNA-binding region (homeobox; TALE-type); sequence CKKRKKDKLP…NQRKRHWKPS (64 aa).

This sequence belongs to the TALE/KNOX homeobox family. In terms of tissue distribution, strongly expressed in ear inflorescence primordia and shoot meristem. Weakly expressed in embryos. Absent from leaves.

It is found in the nucleus. Functionally, probably binds to the DNA sequence 5'-TGAC-3'. This is Homeobox protein knotted-1-like 3 (KNOX3) from Zea mays (Maize).